Consider the following 857-residue polypeptide: MAKKDTTPMMKQYYEIKEQYPDAFLFYRVGDFYELFEDDAIKGAQILELTLTHRSNKTKNPIPMAGVPHLAVDTYVNTLVEKGYKVALCEQLEDPKKAKGMVKRGIIQLITPGTMMQERPDQAKDSNYLTSVISTNSGFGLAYSDLSTGETFSTHLADFEAVANELLSLQTREVVYNGHLTDLNKDFLKKANITVSEPVEVEGEHAEISYVAQNLTDDAEIKATKQLVAYLLSTQKRSLAHLQVAQSYEPTQYLQMSHTVQTNLELIKSAKTSKKMGSLFWLLDKTSTAMGGRLLKSWIERPLLSVTEITRRQEMVQALLDDYFTREKVIDSLKGVYDLERLTGRIAFGSVNAREMLQLAHSLGAIPEILNALLETNNPHLQNFAKQIDPLKGIHDLIVNTIVDNPPLPTTEGGLIREGVSEQLDRYRDAMNNGKKWLSEMESHEREVTGINNLKVGYNKVFGYYIEVTNSNKSKVPTDRYTRKQTLTNAERYITPDLKEHEALILEAEAKSTGLEYDLFVKLREDVKKYIPALQKLAKQIASLDVLTNFATVSEQNNYVRPNFVTDKQEINVVNGRHPVVEQVMTAGSYIPNDVKMDQDTNIFLITGPNMSGKSTYMRQMALIAIMAQIGSFVPADSATLPIFDQIFTRIGAADDLISGQSTFMVEMSEANDALQHATKRSLVLFDEIGRGTATYDGMALAGAIVKYLHDKVGAKALFATHYHELTDLDQTLKHLKNIHVGATEENGKLIFLHKILPGPADQSYGIHVAQLAGLPHKVLREATTMLKRLEKQGASELQPASEQLDLFVPEEASAPAISDDEKDVLDEIQNVYLADKTPLQVMELVAQWQQELKDKD.

608–615 (GPNMSGKS) lines the ATP pocket.

The protein belongs to the DNA mismatch repair MutS family.

Functionally, this protein is involved in the repair of mismatches in DNA. It is possible that it carries out the mismatch recognition step. This protein has a weak ATPase activity. The protein is DNA mismatch repair protein MutS of Lactobacillus johnsonii (strain CNCM I-12250 / La1 / NCC 533).